Reading from the N-terminus, the 288-residue chain is Shikimate dehydrogenase (NADP(+)) (288 aa).

Shikimate contacts are provided by residues 18 to 20 and T65; that span reads SRS. The active-site Proton acceptor is K69. E81 provides a ligand contact to NADP(+). The shikimate site is built by N90 and D106. Residues 131–135, 155–160, and M223 each bind NADP(+); these read GAGGA and NRTLAK. Y225 contributes to the shikimate binding site. G246 contacts NADP(+).

The protein belongs to the shikimate dehydrogenase family. Homodimer.

It carries out the reaction shikimate + NADP(+) = 3-dehydroshikimate + NADPH + H(+). Its pathway is metabolic intermediate biosynthesis; chorismate biosynthesis; chorismate from D-erythrose 4-phosphate and phosphoenolpyruvate: step 4/7. Its function is as follows. Involved in the biosynthesis of the chorismate, which leads to the biosynthesis of aromatic amino acids. Catalyzes the reversible NADPH linked reduction of 3-dehydroshikimate (DHSA) to yield shikimate (SA). The protein is Shikimate dehydrogenase (NADP(+)) of Verminephrobacter eiseniae (strain EF01-2).